The chain runs to 420 residues: MIOREX complex component 9 (420 aa).

A run of 2 helical transmembrane segments spans residues 125 to 145 (VYKV…TFIL) and 149 to 169 (IVVI…FFFF).

Associates with the mitochondrial ribosome.

The protein resides in the mitochondrion. It is found in the mitochondrion membrane. Its function is as follows. Component of MIOREX complexes, large expressome-like assemblies of ribosomes with factors involved in all the steps of post-transcriptional gene expression. This chain is MIOREX complex component 9, found in Saccharomyces cerevisiae (strain ATCC 204508 / S288c) (Baker's yeast).